Consider the following 333-residue polypeptide: Testin-2 (333 aa).

A signal peptide spans 1 to 17 (MIAVLFLAILCLEIDST). 3 cysteine pairs are disulfide-bonded: Cys-135/Cys-178, Cys-169/Cys-211, and Cys-269/Cys-322. Asn-173 carries an N-linked (GlcNAc...) asparagine glycan. Catalysis depends on residues His-276 and Asn-300.

It belongs to the peptidase C1 family. In terms of tissue distribution, expressed in testis and ovary. Low level in spleen, epididymis, kidney, and uterus. Expressed in primary cultures of Sertoli cells.

The protein resides in the secreted. This is Testin-2 from Mus musculus (Mouse).